Here is a 188-residue protein sequence, read N- to C-terminus: Probable nicotinate-nucleotide adenylyltransferase (188 aa).

Belongs to the NadD family.

It catalyses the reaction nicotinate beta-D-ribonucleotide + ATP + H(+) = deamido-NAD(+) + diphosphate. It functions in the pathway cofactor biosynthesis; NAD(+) biosynthesis; deamido-NAD(+) from nicotinate D-ribonucleotide: step 1/1. Catalyzes the reversible adenylation of nicotinate mononucleotide (NaMN) to nicotinic acid adenine dinucleotide (NaAD). The chain is Probable nicotinate-nucleotide adenylyltransferase from Salinispora tropica (strain ATCC BAA-916 / DSM 44818 / JCM 13857 / NBRC 105044 / CNB-440).